Consider the following 607-residue polypeptide: Terpenoid synthase 9 (607 aa).

4 residues coordinate Mg(2+): Asp-356, Asp-360, Asn-501, and Asp-509. Residues 356–360 carry the DDXXD motif motif; sequence DDTFD.

Belongs to the terpene synthase family. Tpsa subfamily. Requires Mg(2+) as cofactor. Mn(2+) is required as a cofactor. In terms of tissue distribution, predominantly expressed in roots but also in stems, leaves and flowers.

The protein resides in the cytoplasm. It functions in the pathway secondary metabolite biosynthesis; terpenoid biosynthesis. Involved in terpene biosynthesis in roots. Possesses diterpene (C20) synthase activity in vitro. Does not seem to be involved in sesquiterpene (C15) biosynthesis. The protein is Terpenoid synthase 9 of Arabidopsis thaliana (Mouse-ear cress).